The chain runs to 352 residues: Alanine racemase (352 aa).

Lys33 functions as the Proton acceptor; specific for D-alanine in the catalytic mechanism. At Lys33 the chain carries N6-(pyridoxal phosphate)lysine. Arg129 contributes to the substrate binding site. Tyr250 acts as the Proton acceptor; specific for L-alanine in catalysis. Met298 is a substrate binding site.

This sequence belongs to the alanine racemase family. Requires pyridoxal 5'-phosphate as cofactor.

The enzyme catalyses L-alanine = D-alanine. It participates in amino-acid biosynthesis; D-alanine biosynthesis; D-alanine from L-alanine: step 1/1. In terms of biological role, catalyzes the interconversion of L-alanine and D-alanine. May also act on other amino acids. This chain is Alanine racemase (alr), found in Neisseria meningitidis serogroup C / serotype 2a (strain ATCC 700532 / DSM 15464 / FAM18).